Here is a 227-residue protein sequence, read N- to C-terminus: PKHD-type hydroxylase ABSDF3031 (227 aa).

A Fe2OG dioxygenase domain is found at 78-178 (KIIPPLFNRY…RFASFFWVQS (101 aa)). Positions 96, 98, and 159 each coordinate Fe cation. A 2-oxoglutarate-binding site is contributed by arginine 169.

The cofactor is Fe(2+). It depends on L-ascorbate as a cofactor.

In Acinetobacter baumannii (strain SDF), this protein is PKHD-type hydroxylase ABSDF3031.